The sequence spans 202 residues: U-Kazal-Dg21.2 (202 aa).

A signal peptide spans 1–20; the sequence is MKYFLWSAVTIFAIVNVVGA. A propeptide spanning residues 21–87 is cleaved from the precursor; sequence KNSDFDPRCL…SFCQVEEDFD (67 aa). Kazal-like domains follow at residues 23–77, 85–140, and 148–202; these read SDFD…KTLM, DFDS…ICRN, and IDPK…KGEC. 5 disulfides stabilise this stretch: Cys29–Cys62, Cys33–Cys55, Cys91–Cys124, Cys95–Cys117, and Cys103–Cys138. A glycan (N-linked (GlcNAc...) asparagine) is linked at Asn140. The propeptide occupies 142–202; the sequence is SFKSELIDPK…NWTLIRKGEC (61 aa). Intrachain disulfides connect Cys154-Cys187, Cys158-Cys180, and Cys166-Cys202. An N-linked (GlcNAc...) asparagine glycan is attached at Asn193.

Expressed by the venom gland.

The protein resides in the secreted. Its function is as follows. May act as a serine protease inhibitor, since it possess the kazal serine protease inhibitor signature. The recombinant peptide does not produce toxic effects on insects. In Dolopus genitalis (Giant Australian assassin fly), this protein is U-Kazal-Dg21.2.